Here is a 320-residue protein sequence, read N- to C-terminus: Glutathione synthetase (320 aa).

The ATP-grasp domain occupies 130 to 315 (KIFISWFSRF…ITGILIDYIE (186 aa)). 156–212 (WKEKNDIILKPLDAMGGKGVFRIKKDDPNFSVIVETLTNYEKKYCMIQTYLPEVQFG) contacts ATP. Mg(2+) contacts are provided by Glu-286 and Asn-288.

Belongs to the prokaryotic GSH synthase family. Requires Mg(2+) as cofactor. Mn(2+) is required as a cofactor.

The enzyme catalyses gamma-L-glutamyl-L-cysteine + glycine + ATP = glutathione + ADP + phosphate + H(+). The protein operates within sulfur metabolism; glutathione biosynthesis; glutathione from L-cysteine and L-glutamate: step 2/2. The protein is Glutathione synthetase of Buchnera aphidicola subsp. Schizaphis graminum (strain Sg).